The chain runs to 240 residues: Fatty acid metabolism regulator protein (240 aa).

Residues Lys6–Phe74 form the HTH gntR-type domain. A DNA-binding region (H-T-H motif) is located at residues Glu34–Gln53.

Homodimer.

It is found in the cytoplasm. Its function is as follows. Multifunctional regulator of fatty acid metabolism. The polypeptide is Fatty acid metabolism regulator protein (Shewanella amazonensis (strain ATCC BAA-1098 / SB2B)).